Here is a 413-residue protein sequence, read N- to C-terminus: Phosphoribosylamine--glycine ligase (413 aa).

One can recognise an ATP-grasp domain in the interval 108–310; that stretch reads KQLMDKYRIP…LMQLIIDLEN (203 aa). Residue 134–190 participates in ATP binding; the sequence is VETCDLPIVIKKDGLAAGKGVIIAFTREDALDGVKKIYQEEKGKVVFESYLEGEEFS. 2 residues coordinate Mg(2+): Glu280 and Asn282.

The protein belongs to the GARS family. The cofactor is Mg(2+). Requires Mn(2+) as cofactor.

It catalyses the reaction 5-phospho-beta-D-ribosylamine + glycine + ATP = N(1)-(5-phospho-beta-D-ribosyl)glycinamide + ADP + phosphate + H(+). It functions in the pathway purine metabolism; IMP biosynthesis via de novo pathway; N(1)-(5-phospho-D-ribosyl)glycinamide from 5-phospho-alpha-D-ribose 1-diphosphate: step 2/2. This chain is Phosphoribosylamine--glycine ligase, found in Staphylococcus epidermidis (strain ATCC 12228 / FDA PCI 1200).